The primary structure comprises 412 residues: Poly-beta-1,6-N-acetyl-D-glucosamine synthase (412 aa).

The next 4 helical transmembrane spans lie at 7 to 28 (LLFY…YFFI), 298 to 320 (IASI…TANI), 332 to 354 (IFFF…ALFI), and 364 to 386 (VGLI…VVIM).

The protein belongs to the glycosyltransferase 2 family.

It localises to the cell membrane. Its function is as follows. N-acetylglucosaminyltransferase that catalyzes the polymerization of single monomer units of UDP-N-acetylglucosamine to produce the linear homomer poly-beta-1,6-N-acetyl-D-glucosamine (PNAG, also referred to as PIA), a biofilm adhesin polysaccharide. Requires IcaD for full activity. This is Poly-beta-1,6-N-acetyl-D-glucosamine synthase (icaA) from Staphylococcus epidermidis (strain ATCC 35984 / DSM 28319 / BCRC 17069 / CCUG 31568 / BM 3577 / RP62A).